The sequence spans 429 residues: MMSYIGLQQDSGEYKIQKIHAREILDSRGNPTIEVDVFTPKGFGRASVPSGASTGTNEALELRDADPNRYGGKGVLTAVKNVNTIIQKELLGLDVRNQREIDELMIELDETENKSNLGANSILGVSMAVAKAAADSLNMPLYRYFGGSNAFTLPVPTMNVLNGGKHAGNELAIQEFMIQPKGAETFYEALQIGAEIYHVLGKYLEKKYGRSSTNVGYEGGYAPKMSESTEALDALVQAIEEAGYTESEVTIGLDAAATEFYEEEFYNIDGKKLAAPELLDYYVELVNSYPILSIEDPFYEEAFEDFEALTNELWDTIIVGDDLFVTNIERLSRGVDMGAANALLLKVNQIGSISEAFDAASMASRNGYTVIVSHRSAETEDTTISDLAVAIGAEMIKTGAPARGERTAKYNQLLRIEEDLGEVAHYVQL.

Gln174 contributes to the (2R)-2-phosphoglycerate binding site. The active-site Proton donor is the Glu218. Residues Asp254, Glu295, and Asp321 each contribute to the Mg(2+) site. (2R)-2-phosphoglycerate contacts are provided by Lys346, Arg375, Ser376, and Lys397. Lys346 (proton acceptor) is an active-site residue.

This sequence belongs to the enolase family. The cofactor is Mg(2+).

The protein resides in the cytoplasm. It localises to the secreted. Its subcellular location is the cell surface. It catalyses the reaction (2R)-2-phosphoglycerate = phosphoenolpyruvate + H2O. Its pathway is carbohydrate degradation; glycolysis; pyruvate from D-glyceraldehyde 3-phosphate: step 4/5. Catalyzes the reversible conversion of 2-phosphoglycerate (2-PG) into phosphoenolpyruvate (PEP). It is essential for the degradation of carbohydrates via glycolysis. This chain is Enolase, found in Methanosarcina acetivorans (strain ATCC 35395 / DSM 2834 / JCM 12185 / C2A).